The chain runs to 442 residues: Histidine--tRNA ligase (442 aa).

This sequence belongs to the class-II aminoacyl-tRNA synthetase family. In terms of assembly, homodimer.

The protein localises to the cytoplasm. The enzyme catalyses tRNA(His) + L-histidine + ATP = L-histidyl-tRNA(His) + AMP + diphosphate + H(+). This is Histidine--tRNA ligase from Psychrobacter arcticus (strain DSM 17307 / VKM B-2377 / 273-4).